Consider the following 374-residue polypeptide: Queuine tRNA-ribosyltransferase (374 aa).

Asp-89 serves as the catalytic Proton acceptor. Substrate contacts are provided by residues 89–93, Asp-143, Gln-187, and Gly-214; that span reads DSGGF. Residues 245–251 are RNA binding; sequence GVGKPED. Asp-264 functions as the Nucleophile in the catalytic mechanism. The interval 269–273 is RNA binding; important for wobble base 34 recognition; that stretch reads TRNAR. Zn(2+) contacts are provided by Cys-302, Cys-304, Cys-307, and His-333.

It belongs to the queuine tRNA-ribosyltransferase family. Homodimer. Within each dimer, one monomer is responsible for RNA recognition and catalysis, while the other monomer binds to the replacement base PreQ1. Requires Zn(2+) as cofactor.

The catalysed reaction is 7-aminomethyl-7-carbaguanine + guanosine(34) in tRNA = 7-aminomethyl-7-carbaguanosine(34) in tRNA + guanine. It functions in the pathway tRNA modification; tRNA-queuosine biosynthesis. Catalyzes the base-exchange of a guanine (G) residue with the queuine precursor 7-aminomethyl-7-deazaguanine (PreQ1) at position 34 (anticodon wobble position) in tRNAs with GU(N) anticodons (tRNA-Asp, -Asn, -His and -Tyr). Catalysis occurs through a double-displacement mechanism. The nucleophile active site attacks the C1' of nucleotide 34 to detach the guanine base from the RNA, forming a covalent enzyme-RNA intermediate. The proton acceptor active site deprotonates the incoming PreQ1, allowing a nucleophilic attack on the C1' of the ribose to form the product. After dissociation, two additional enzymatic reactions on the tRNA convert PreQ1 to queuine (Q), resulting in the hypermodified nucleoside queuosine (7-(((4,5-cis-dihydroxy-2-cyclopenten-1-yl)amino)methyl)-7-deazaguanosine). The polypeptide is Queuine tRNA-ribosyltransferase (Serratia proteamaculans (strain 568)).